The following is a 77-amino-acid chain: uncharacterized protein (77 aa).

Residues 13-33 (VPVIRLSVFLHFFFVFPFCLL) form a helical membrane-spanning segment.

The protein resides in the membrane. This is an uncharacterized protein from Saccharomyces cerevisiae (strain ATCC 204508 / S288c) (Baker's yeast).